The primary structure comprises 330 residues: Ferredoxin--NADP reductase (330 aa).

Positions 35, 43, 48, 90, 123, 285, and 326 each coordinate FAD.

The protein belongs to the ferredoxin--NADP reductase type 2 family. Homodimer. FAD serves as cofactor.

It catalyses the reaction 2 reduced [2Fe-2S]-[ferredoxin] + NADP(+) + H(+) = 2 oxidized [2Fe-2S]-[ferredoxin] + NADPH. The protein is Ferredoxin--NADP reductase of Streptococcus pyogenes serotype M1.